The chain runs to 123 residues: Large ribosomal subunit protein uL18 (123 aa).

Belongs to the universal ribosomal protein uL18 family. Part of the 50S ribosomal subunit; part of the 5S rRNA/L5/L18/L25 subcomplex. Contacts the 5S and 23S rRNAs.

Its function is as follows. This is one of the proteins that bind and probably mediate the attachment of the 5S RNA into the large ribosomal subunit, where it forms part of the central protuberance. This chain is Large ribosomal subunit protein uL18, found in Chlamydia felis (strain Fe/C-56) (Chlamydophila felis).